The chain runs to 108 residues: uncharacterized protein (108 aa).

Positions 1–24 (MNLWEFRFGKSFLFIPNFIMKVLA) are cleaved as a signal peptide.

This sequence to M.jannaschii MJ0803.

This is an uncharacterized protein from Methanocaldococcus jannaschii (strain ATCC 43067 / DSM 2661 / JAL-1 / JCM 10045 / NBRC 100440) (Methanococcus jannaschii).